A 781-amino-acid polypeptide reads, in one-letter code: Aconitate hydratase, mitochondrial (781 aa).

The transit peptide at 1-27 (MAPYSLLVTRLQKALGVRQYHVASVLC) directs the protein to the mitochondrion. Pyrrolidone carboxylic acid is present on glutamine 28. Lysine 31 bears the N6-succinyllysine mark. At lysine 50 the chain carries N6-acetyllysine; alternate. At lysine 50 the chain carries N6-succinyllysine; alternate. Glutamine 99 is a binding site for substrate. Lysine 138 and lysine 144 each carry N6-acetyllysine; alternate. Lysine 138 and lysine 144 each carry N6-succinyllysine; alternate. Substrate is bound at residue 192-194 (DSH). Lysine 233 bears the N6-acetyllysine; alternate mark. The residue at position 233 (lysine 233) is an N6-succinyllysine; alternate. Residue cysteine 385 participates in [4Fe-4S] cluster binding. At lysine 411 the chain carries N6-succinyllysine. Residues cysteine 448 and cysteine 451 each coordinate [4Fe-4S] cluster. The substrate site is built by arginine 474 and arginine 479. Lysine 517 and lysine 523 each carry N6-acetyllysine; alternate. N6-succinyllysine; alternate occurs at positions 517 and 523. Over residues 524–537 (LEAPDADELPRAEF) the composition is skewed to basic and acidic residues. Residues 524-561 (LEAPDADELPRAEFDPGQDTYQHPPKDSSGQRVDVSPT) form a disordered region. At lysine 549 the chain carries N6-succinyllysine. Residues 551-561 (SSGQRVDVSPT) are compositionally biased toward polar residues. Serine 559 bears the Phosphoserine mark. Lysine 573 is subject to N6-acetyllysine; alternate. Lysine 573 carries the N6-succinyllysine; alternate modification. N6-succinyllysine occurs at positions 577 and 591. Lysine 605 is subject to N6-acetyllysine; alternate. Position 605 is an N6-succinyllysine; alternate (lysine 605). Residue arginine 607 coordinates substrate. Lysine 628 is modified (N6-succinyllysine). Serine 670 bears the Phosphoserine mark. 670–671 (SR) lines the substrate pocket. Position 689 is an N6-succinyllysine (lysine 689). 2 positions are modified to N6-acetyllysine; alternate: lysine 723 and lysine 730. 2 positions are modified to N6-succinyllysine; alternate: lysine 723 and lysine 730. N6-acetyllysine occurs at positions 736, 739, and 743.

This sequence belongs to the aconitase/IPM isomerase family. Monomer. [4Fe-4S] cluster is required as a cofactor. In terms of processing, forms covalent cross-links mediated by transglutaminase TGM2, between a glutamine and the epsilon-amino group of a lysine residue, forming homopolymers and heteropolymers.

It localises to the mitochondrion. The enzyme catalyses citrate = D-threo-isocitrate. Its pathway is carbohydrate metabolism; tricarboxylic acid cycle; isocitrate from oxaloacetate: step 2/2. In terms of biological role, catalyzes the isomerization of citrate to isocitrate via cis-aconitate. This Sus scrofa (Pig) protein is Aconitate hydratase, mitochondrial (ACO2).